Consider the following 156-residue polypeptide: Small ribosomal subunit protein uS7c (156 aa).

This sequence belongs to the universal ribosomal protein uS7 family. As to quaternary structure, part of the 30S ribosomal subunit.

The protein resides in the plastid. The protein localises to the chloroplast. In terms of biological role, one of the primary rRNA binding proteins, it binds directly to 16S rRNA where it nucleates assembly of the head domain of the 30S subunit. This Ostreococcus tauri protein is Small ribosomal subunit protein uS7c (rps7).